The chain runs to 53 residues: UPF0391 membrane protein PA5482 (53 aa).

The next 2 helical transmembrane spans lie at tryptophan 4–alanine 24 and glycine 29–glycine 49.

The protein belongs to the UPF0391 family.

It is found in the cell membrane. In Pseudomonas aeruginosa (strain ATCC 15692 / DSM 22644 / CIP 104116 / JCM 14847 / LMG 12228 / 1C / PRS 101 / PAO1), this protein is UPF0391 membrane protein PA5482.